Reading from the N-terminus, the 68-residue chain is MKFSCGFLLIFLVLSAMIATFSEVEATVKCGGCNRKCCAGGCRSGKCINGKCQCYGRSDLNEEFENYQ.

Residues 1–26 (MKFSCGFLLIFLVLSAMIATFSEVEA) form the signal peptide. 4 disulfide bridges follow: Cys30/Cys38, Cys33/Cys54, Cys37/Cys47, and Cys42/Cys52. Tyr55 is subject to Tyrosine amide. A propeptide spanning residues 57 to 68 (RSDLNEEFENYQ) is cleaved from the precursor.

It belongs to the short scorpion toxin superfamily. Potassium channel inhibitor family. Epsilon-KTx 01 subfamily. As to expression, expressed by the venom gland.

The protein localises to the secreted. In terms of biological role, potassium channel blocker. At 3 uM, this toxin blocks voltage-gated potassium channels rKv1.2/KCNA2 (5%), hKv1.3/KCNA3 (10%),rKv1.4/KCNA4 (20%), Kv11/hERG (24%), and Shaker-IR (27%). The polypeptide is Potassium channel toxin epsilon-KTx 1.2 (Tityus serrulatus (Brazilian scorpion)).